The following is a 320-amino-acid chain: Nicotianamine synthase 1 (320 aa).

Belongs to the nicotianamine synthase (NAS)-like family. In shoots and roots.

The catalysed reaction is 3 S-adenosyl-L-methionine = nicotianamine + 3 S-methyl-5'-thioadenosine + 3 H(+). Its function is as follows. Synthesizes nicotianamine, a polyamine which serves as a sensor for the physiological iron status within the plant, and/or might be involved in the transport of iron. The protein is Nicotianamine synthase 1 (NAS1) of Arabidopsis thaliana (Mouse-ear cress).